A 146-amino-acid chain; its full sequence is 3-hydroxyacyl-[acyl-carrier-protein] dehydratase FabZ (146 aa).

His48 is an active-site residue.

It belongs to the thioester dehydratase family. FabZ subfamily.

It localises to the cytoplasm. It carries out the reaction a (3R)-hydroxyacyl-[ACP] = a (2E)-enoyl-[ACP] + H2O. In terms of biological role, involved in unsaturated fatty acids biosynthesis. Catalyzes the dehydration of short chain beta-hydroxyacyl-ACPs and long chain saturated and unsaturated beta-hydroxyacyl-ACPs. This Campylobacter lari (strain RM2100 / D67 / ATCC BAA-1060) protein is 3-hydroxyacyl-[acyl-carrier-protein] dehydratase FabZ.